An 80-amino-acid polypeptide reads, in one-letter code: uncharacterized protein (80 aa).

Belongs to the BolA/IbaG family.

This is an uncharacterized protein from Buchnera aphidicola subsp. Schizaphis graminum (strain Sg).